Reading from the N-terminus, the 599-residue chain is Elongation factor 4 (599 aa).

In terms of domain architecture, tr-type G spans 5 to 187 (SHIRNFSIIA…ELVRLVPPPT (183 aa)). Residues 17–22 (DHGKST) and 134–137 (NKMD) each bind GTP.

The protein belongs to the TRAFAC class translation factor GTPase superfamily. Classic translation factor GTPase family. LepA subfamily.

The protein resides in the cell inner membrane. It catalyses the reaction GTP + H2O = GDP + phosphate + H(+). In terms of biological role, required for accurate and efficient protein synthesis under certain stress conditions. May act as a fidelity factor of the translation reaction, by catalyzing a one-codon backward translocation of tRNAs on improperly translocated ribosomes. Back-translocation proceeds from a post-translocation (POST) complex to a pre-translocation (PRE) complex, thus giving elongation factor G a second chance to translocate the tRNAs correctly. Binds to ribosomes in a GTP-dependent manner. In Cellvibrio japonicus (strain Ueda107) (Pseudomonas fluorescens subsp. cellulosa), this protein is Elongation factor 4.